The following is a 486-amino-acid chain: Protein nucleotidyltransferase YdiU (486 aa).

ATP is bound by residues G89, G91, R92, K112, D124, G125, R175, and R182. The active-site Proton acceptor is the D251. Mg(2+)-binding residues include N252 and D261. D261 contacts ATP.

The protein belongs to the SELO family. Mg(2+) serves as cofactor. Requires Mn(2+) as cofactor.

The catalysed reaction is L-seryl-[protein] + ATP = 3-O-(5'-adenylyl)-L-seryl-[protein] + diphosphate. The enzyme catalyses L-threonyl-[protein] + ATP = 3-O-(5'-adenylyl)-L-threonyl-[protein] + diphosphate. It catalyses the reaction L-tyrosyl-[protein] + ATP = O-(5'-adenylyl)-L-tyrosyl-[protein] + diphosphate. It carries out the reaction L-histidyl-[protein] + UTP = N(tele)-(5'-uridylyl)-L-histidyl-[protein] + diphosphate. The catalysed reaction is L-seryl-[protein] + UTP = O-(5'-uridylyl)-L-seryl-[protein] + diphosphate. The enzyme catalyses L-tyrosyl-[protein] + UTP = O-(5'-uridylyl)-L-tyrosyl-[protein] + diphosphate. Its function is as follows. Nucleotidyltransferase involved in the post-translational modification of proteins. It can catalyze the addition of adenosine monophosphate (AMP) or uridine monophosphate (UMP) to a protein, resulting in modifications known as AMPylation and UMPylation. This chain is Protein nucleotidyltransferase YdiU, found in Shouchella clausii (strain KSM-K16) (Alkalihalobacillus clausii).